The sequence spans 256 residues: Proteasome subunit alpha (256 aa).

The tract at residues 235-256 (ELDSNGSDGNGDAPELNGGSSD) is disordered.

It belongs to the peptidase T1A family. The 20S proteasome core is composed of 14 alpha and 14 beta subunits that assemble into four stacked heptameric rings, resulting in a barrel-shaped structure. The two inner rings, each composed of seven catalytic beta subunits, are sandwiched by two outer rings, each composed of seven alpha subunits. The catalytic chamber with the active sites is on the inside of the barrel. Has a gated structure, the ends of the cylinder being occluded by the N-termini of the alpha-subunits. Is capped by the proteasome-associated ATPase, ARC.

Its subcellular location is the cytoplasm. It participates in protein degradation; proteasomal Pup-dependent pathway. Its activity is regulated as follows. The formation of the proteasomal ATPase ARC-20S proteasome complex, likely via the docking of the C-termini of ARC into the intersubunit pockets in the alpha-rings, may trigger opening of the gate for substrate entry. Interconversion between the open-gate and close-gate conformations leads to a dynamic regulation of the 20S proteasome proteolysis activity. In terms of biological role, component of the proteasome core, a large protease complex with broad specificity involved in protein degradation. In Mycolicibacterium paratuberculosis (strain ATCC BAA-968 / K-10) (Mycobacterium paratuberculosis), this protein is Proteasome subunit alpha.